A 125-amino-acid polypeptide reads, in one-letter code: Large ribosomal subunit protein bL20 (125 aa).

This sequence belongs to the bacterial ribosomal protein bL20 family.

In terms of biological role, binds directly to 23S ribosomal RNA and is necessary for the in vitro assembly process of the 50S ribosomal subunit. It is not involved in the protein synthesizing functions of that subunit. This chain is Large ribosomal subunit protein bL20, found in Rhizorhabdus wittichii (strain DSM 6014 / CCUG 31198 / JCM 15750 / NBRC 105917 / EY 4224 / RW1) (Sphingomonas wittichii).